The sequence spans 422 residues: Metallocarboxypeptidase A (422 aa).

A signal peptide spans 1-17 (MRSVLSLALLAANVVTA). Positions 18 to 112 (AVVSPFDYSG…FEAYSAGYAP (95 aa)) are cleaved as a propeptide — activation peptide. A Peptidase M14 domain is found at 119–419 (SYHSYQDHIS…AGTVAMLKAV (301 aa)). Zn(2+)-binding residues include His-179 and Glu-182. Residues 179 to 182 (HARE), Arg-237, and 254 to 255 (NR) contribute to the substrate site. Cysteines 248 and 271 form a disulfide. A Zn(2+)-binding site is contributed by His-309. Position 310 to 311 (310 to 311 (SY)) interacts with substrate. Glu-385 serves as the catalytic Proton donor/acceptor.

The protein belongs to the peptidase M14 family. Requires Zn(2+) as cofactor.

It localises to the secreted. Functionally, extracellular metalloprotease that contributes to pathogenicity. This Trichophyton tonsurans (Scalp ringworm fungus) protein is Metallocarboxypeptidase A (MCPA).